A 274-amino-acid polypeptide reads, in one-letter code: MRSNNNNPLTRDEILSRYFPQYRPAVAASQGLSGGSCIIAHDTHRIVLRRHHDPDAPPAHFLRHHRALSQLPASLAPRALFYTPGWMAVEYLHGVVNSALPDADELAALLYHLHQQPRFGWRIALSPLLAQYWSCCDPARRTPFWLRRLKQLQKNGEPRPLRLAPLHMDVHGDNIVLTSAGLRLIDWEYAGDGDIALELAAVWVEDERQHRQLANAYAACARIDARQLWRQIRLWHPWVIMLKAGWFEYRWRQTGEQQFIRLADETWRQLRMKG.

Belongs to the thiamine kinase family.

It catalyses the reaction thiamine + ATP = thiamine phosphate + ADP + H(+). It functions in the pathway cofactor biosynthesis; thiamine diphosphate biosynthesis; thiamine phosphate from thiamine: step 1/1. Functionally, catalyzes the ATP-dependent phosphorylation of thiamine to thiamine phosphate. Is involved in thiamine salvage. In Salmonella newport (strain SL254), this protein is Thiamine kinase.